A 455-amino-acid chain; its full sequence is Ribulose bisphosphate carboxylase large chain (455 aa).

An N6,N6,N6-trimethyllysine modification is found at Lys-5. Substrate-binding residues include Asn-114 and Thr-164. Lys-166 serves as the catalytic Proton acceptor. Substrate is bound at residue Lys-168. Lys-192, Asp-194, and Glu-195 together coordinate Mg(2+). Lys-192 carries the post-translational modification N6-carboxylysine. His-285 acts as the Proton acceptor in catalysis. Residues Arg-286, His-318, and Ser-370 each contribute to the substrate site.

It belongs to the RuBisCO large chain family. Type I subfamily. As to quaternary structure, heterohexadecamer of 8 large chains and 8 small chains; disulfide-linked. The disulfide link is formed within the large subunit homodimers. Mg(2+) serves as cofactor. In terms of processing, the disulfide bond which can form in the large chain dimeric partners within the hexadecamer appears to be associated with oxidative stress and protein turnover.

Its subcellular location is the plastid. It localises to the chloroplast. The enzyme catalyses 2 (2R)-3-phosphoglycerate + 2 H(+) = D-ribulose 1,5-bisphosphate + CO2 + H2O. It catalyses the reaction D-ribulose 1,5-bisphosphate + O2 = 2-phosphoglycolate + (2R)-3-phosphoglycerate + 2 H(+). In terms of biological role, ruBisCO catalyzes two reactions: the carboxylation of D-ribulose 1,5-bisphosphate, the primary event in carbon dioxide fixation, as well as the oxidative fragmentation of the pentose substrate in the photorespiration process. Both reactions occur simultaneously and in competition at the same active site. The sequence is that of Ribulose bisphosphate carboxylase large chain from Lupinus latifolius (Broad-leaved lupine).